A 102-amino-acid chain; its full sequence is MVQAVSDNLISNAWVISCNPLALEVPERIGSTYFCFGGAIFILVAPLTNLVYNEDIVSQTRLYIYYRGSRDSRACMLDIVTLVDVSKRSKLVLLLQIYFFSF.

The helical transmembrane segment at 29-52 threads the bilayer; sequence IGSTYFCFGGAIFILVAPLTNLVY.

It is found in the membrane. This is an uncharacterized protein from Saccharomyces cerevisiae (strain ATCC 204508 / S288c) (Baker's yeast).